Reading from the N-terminus, the 309-residue chain is DNA replication terminus site-binding protein (309 aa).

Belongs to the Tus family.

The protein resides in the cytoplasm. Trans-acting protein required for termination of DNA replication. Binds to DNA replication terminator sequences (terA to terF) to prevent the passage of replication forks. The termination efficiency will be affected by the affinity of this protein for the terminator sequence. This Yersinia enterocolitica serotype O:8 / biotype 1B (strain NCTC 13174 / 8081) protein is DNA replication terminus site-binding protein.